The sequence spans 100 residues: U12-ctenitoxin-Pn1a (100 aa).

A signal peptide spans 1–28 (MKYRIFKMKYTLLFLSVIALVHIFAVEA). The propeptide occupies 29 to 41 (KDEPESDALVPQE). Disulfide bonds link C44/C58, C51/C64, C57/C82, C66/C80, and C90/C97.

This sequence belongs to the neurotoxin 09 (Tx3-6) family. In terms of tissue distribution, expressed by the venom gland.

The protein resides in the secreted. Functionally, probable neurotoxin. This is U12-ctenitoxin-Pn1a from Phoneutria nigriventer (Brazilian armed spider).